A 67-amino-acid polypeptide reads, in one-letter code: Protein AaeX (67 aa).

A run of 2 helical transmembrane segments spans residues 9-29 (IFGL…ALFF) and 47-67 (PALF…CLFV).

It belongs to the AaeX family.

The protein resides in the cell membrane. The polypeptide is Protein AaeX (Serratia marcescens).